The primary structure comprises 145 residues: Cell division protein SepF (145 aa).

Positions 23 to 41 (PQEVSKTKDENAKPKHETP) are enriched in basic and acidic residues. Residues 23 to 42 (PQEVSKTKDENAKPKHETPK) are disordered.

Belongs to the SepF family. In terms of assembly, homodimer. Interacts with FtsZ.

It is found in the cytoplasm. Its function is as follows. Cell division protein that is part of the divisome complex and is recruited early to the Z-ring. Probably stimulates Z-ring formation, perhaps through the cross-linking of FtsZ protofilaments. Its function overlaps with FtsA. In Caldicellulosiruptor bescii (strain ATCC BAA-1888 / DSM 6725 / KCTC 15123 / Z-1320) (Anaerocellum thermophilum), this protein is Cell division protein SepF.